The following is a 414-amino-acid chain: Alanine--glyoxylate aminotransferase (414 aa).

The transit peptide at 1–23 directs the protein to the mitochondrion; the sequence is MFRALARASATLGPQVAGWARTM. The residue at position 231 (Lys-231) is an N6-(pyridoxal phosphate)lysine. Lys-247 bears the N6-acetyllysine; alternate mark. Lys-247 bears the N6-succinyllysine; alternate mark. Residues Lys-256 and Lys-334 each carry the N6-acetyllysine modification. Arg-382 contributes to the substrate binding site. The short motif at 412-414 is the Microbody targeting signal element; sequence NKL.

It belongs to the class-V pyridoxal-phosphate-dependent aminotransferase family. In terms of assembly, homodimer. Pyridoxal 5'-phosphate serves as cofactor.

It is found in the peroxisome. The protein resides in the mitochondrion matrix. It carries out the reaction L-serine + pyruvate = 3-hydroxypyruvate + L-alanine. The enzyme catalyses glyoxylate + L-alanine = glycine + pyruvate. Its function is as follows. Catalyzes the transamination of glyoxylate to glycine and contributes to the glyoxylate detoxification. Catalyzes the transamination between L-serine and pyruvate and contributes to gluconeogenesis from the L-serine metabolism. The chain is Alanine--glyoxylate aminotransferase from Felis catus (Cat).